The following is a 387-amino-acid chain: uncharacterized protein (387 aa).

A signal peptide spans 1-27 (MKKWMITIAMLILAGIALFVFISPLKS).

This is an uncharacterized protein from Bacillus subtilis (strain 168).